A 705-amino-acid chain; its full sequence is Ribonuclease R (705 aa).

An RNB domain is found at R240 to R567. Residues G615 to I696 form the S1 motif domain.

It belongs to the RNR ribonuclease family. RNase R subfamily.

It localises to the cytoplasm. It carries out the reaction Exonucleolytic cleavage in the 3'- to 5'-direction to yield nucleoside 5'-phosphates.. Functionally, 3'-5' exoribonuclease that releases 5'-nucleoside monophosphates and is involved in maturation of structured RNAs. This Aquifex aeolicus (strain VF5) protein is Ribonuclease R.